The primary structure comprises 273 residues: Formamidopyrimidine-DNA glycosylase (273 aa).

P2 serves as the catalytic Schiff-base intermediate with DNA. Residue E3 is the Proton donor of the active site. The active-site Proton donor; for beta-elimination activity is the K57. Residues H91, R110, and K151 each coordinate DNA. Residues 236–270 (QVYGRKDEACNDCGTIIEAKVIGQRNSYFCPHCQM) form an FPG-type zinc finger. The active-site Proton donor; for delta-elimination activity is the R260.

It belongs to the FPG family. In terms of assembly, monomer. Requires Zn(2+) as cofactor.

The catalysed reaction is Hydrolysis of DNA containing ring-opened 7-methylguanine residues, releasing 2,6-diamino-4-hydroxy-5-(N-methyl)formamidopyrimidine.. The enzyme catalyses 2'-deoxyribonucleotide-(2'-deoxyribose 5'-phosphate)-2'-deoxyribonucleotide-DNA = a 3'-end 2'-deoxyribonucleotide-(2,3-dehydro-2,3-deoxyribose 5'-phosphate)-DNA + a 5'-end 5'-phospho-2'-deoxyribonucleoside-DNA + H(+). Functionally, involved in base excision repair of DNA damaged by oxidation or by mutagenic agents. Acts as a DNA glycosylase that recognizes and removes damaged bases. Has a preference for oxidized purines, such as 7,8-dihydro-8-oxoguanine (8-oxoG). Has AP (apurinic/apyrimidinic) lyase activity and introduces nicks in the DNA strand. Cleaves the DNA backbone by beta-delta elimination to generate a single-strand break at the site of the removed base with both 3'- and 5'-phosphates. The sequence is that of Formamidopyrimidine-DNA glycosylase from Actinobacillus pleuropneumoniae serotype 5b (strain L20).